The following is a 118-amino-acid chain: V-type proton ATPase subunit G 2 (118 aa).

The tract at residues 23–91 is disordered; the sequence is ADARKRKARR…QGMQSSQQRN (69 aa). Positions 35–55 are enriched in basic and acidic residues; the sequence is QAKEEAQMEVEQYRREREQEF. 2 stretches are compositionally biased toward polar residues: residues 56–69 and 78–89; these read QSKQQAAMGSQGNL and RRQVQGMQSSQQ.

This sequence belongs to the V-ATPase G subunit family. V-ATPase is a heteromultimeric enzyme made up of two complexes: the ATP-hydrolytic V1 complex and the proton translocation V0 complex. The V1 complex consists of three catalytic AB heterodimers that form a heterohexamer, three peripheral stalks each consisting of EG heterodimers, one central rotor including subunits D and F, and the regulatory subunits C and H. The proton translocation complex V0 consists of the proton transport subunit a, a ring of proteolipid subunits c9c'', rotary subunit d, subunits e and f, and the accessory subunits ATP6AP1/Ac45 and ATP6AP2/PRR.

The protein localises to the melanosome. The protein resides in the cytoplasmic vesicle. It localises to the clathrin-coated vesicle membrane. Functionally, subunit of the V1 complex of vacuolar(H+)-ATPase (V-ATPase), a multisubunit enzyme composed of a peripheral complex (V1) that hydrolyzes ATP and a membrane integral complex (V0) that translocates protons. V-ATPase is responsible for acidifying and maintaining the pH of intracellular compartments and in some cell types, is targeted to the plasma membrane, where it is responsible for acidifying the extracellular environment. The sequence is that of V-type proton ATPase subunit G 2 (Atp6v1g2) from Mus musculus (Mouse).